We begin with the raw amino-acid sequence, 199 residues long: V-type ATP synthase subunit E (199 aa).

The protein belongs to the V-ATPase E subunit family.

Produces ATP from ADP in the presence of a proton gradient across the membrane. This chain is V-type ATP synthase subunit E, found in Clostridium botulinum (strain Hall / ATCC 3502 / NCTC 13319 / Type A).